A 283-amino-acid chain; its full sequence is Serine/threonine-protein phosphatase Pgam5, mitochondrial (283 aa).

Residues 7-23 (MYGLPSAAVAVGTALLN) form a helical membrane-spanning segment.

It belongs to the phosphoglycerate mutase family. BPG-dependent PGAM subfamily. As to quaternary structure, interacts with skn-1.

The protein resides in the mitochondrion outer membrane. The enzyme catalyses O-phospho-L-seryl-[protein] + H2O = L-seryl-[protein] + phosphate. It carries out the reaction O-phospho-L-threonyl-[protein] + H2O = L-threonyl-[protein] + phosphate. Its function is as follows. Displays phosphatase activity for serine/threonine residues. Has apparently no phosphoglycerate mutase activity. This Caenorhabditis briggsae protein is Serine/threonine-protein phosphatase Pgam5, mitochondrial (pgam-5).